A 229-amino-acid chain; its full sequence is Thiamine-phosphate synthase (229 aa).

4-amino-2-methyl-5-(diphosphooxymethyl)pyrimidine-binding positions include 38 to 42 (QFREK) and Asn-73. 2 residues coordinate Mg(2+): Asp-74 and Asp-93. Position 111 (Ser-111) interacts with 4-amino-2-methyl-5-(diphosphooxymethyl)pyrimidine. Residue 137–139 (TLS) coordinates 2-[(2R,5Z)-2-carboxy-4-methylthiazol-5(2H)-ylidene]ethyl phosphate. Lys-140 provides a ligand contact to 4-amino-2-methyl-5-(diphosphooxymethyl)pyrimidine. 2-[(2R,5Z)-2-carboxy-4-methylthiazol-5(2H)-ylidene]ethyl phosphate is bound by residues Gly-169 and 189-190 (IS).

Belongs to the thiamine-phosphate synthase family. Mg(2+) is required as a cofactor.

It catalyses the reaction 2-[(2R,5Z)-2-carboxy-4-methylthiazol-5(2H)-ylidene]ethyl phosphate + 4-amino-2-methyl-5-(diphosphooxymethyl)pyrimidine + 2 H(+) = thiamine phosphate + CO2 + diphosphate. It carries out the reaction 2-(2-carboxy-4-methylthiazol-5-yl)ethyl phosphate + 4-amino-2-methyl-5-(diphosphooxymethyl)pyrimidine + 2 H(+) = thiamine phosphate + CO2 + diphosphate. The catalysed reaction is 4-methyl-5-(2-phosphooxyethyl)-thiazole + 4-amino-2-methyl-5-(diphosphooxymethyl)pyrimidine + H(+) = thiamine phosphate + diphosphate. It functions in the pathway cofactor biosynthesis; thiamine diphosphate biosynthesis; thiamine phosphate from 4-amino-2-methyl-5-diphosphomethylpyrimidine and 4-methyl-5-(2-phosphoethyl)-thiazole: step 1/1. Functionally, condenses 4-methyl-5-(beta-hydroxyethyl)thiazole monophosphate (THZ-P) and 2-methyl-4-amino-5-hydroxymethyl pyrimidine pyrophosphate (HMP-PP) to form thiamine monophosphate (TMP). The polypeptide is Thiamine-phosphate synthase (Streptococcus suis (strain 98HAH33)).